Consider the following 179-residue polypeptide: Replication restart protein DnaT (179 aa).

The required for trimerization and to bind PriB stretch occupies residues 1-83 (MSSRILTSHF…FEEPAAAPVA (83 aa)). The binds ssDNA stretch occupies residues 84–179 (VPMGKFAMYA…DSHIPRGFRG (96 aa)). The interval 151 to 179 (SRASNGGQPKRDVNSVSEPDSHIPRGFRG) is disordered. Over residues 159–173 (PKRDVNSVSEPDSHI) the composition is skewed to basic and acidic residues.

Belongs to the DnaT family. Homotrimer. Interacts with PriB. Interacts with PriC. Component of the replication restart primosome. Primosome assembly occurs via a 'hand-off' mechanism. PriA binds to replication forks, subsequently PriB then DnaT bind; DnaT then displaces ssDNA to generate the helicase loading substrate.

Involved in the restart of stalled replication forks, which reloads the replicative helicase on sites other than the origin of replication. Can function in multiple replication restart pathways. Displaces ssDNA from a PriB-ssDNA complex. Probably forms a spiral filament on ssDNA. Functionally, binds single-stranded (ss)DNA. The minimal binding site is about 26 +/- 2 nucleotides (nt) per trimer. Two DNA-protein complexes are seen with 55 nt-long ssDNA. The chain is Replication restart protein DnaT from Klebsiella pneumoniae subsp. pneumoniae (strain ATCC 700721 / MGH 78578).